Consider the following 66-residue polypeptide: UPF0370 protein YpfN (66 aa).

Residues 4–24 (LAKYWWILVLVFLVGVLLNVI) traverse the membrane as a helical segment. The interval 39–66 (KPELPPHRDFNDKWDDEDGWPKKDQPKK) is disordered. Residues 42 to 66 (LPPHRDFNDKWDDEDGWPKKDQPKK) are compositionally biased toward basic and acidic residues.

It belongs to the UPF0370 family.

It localises to the cell membrane. The protein is UPF0370 protein YpfN of Salmonella paratyphi B (strain ATCC BAA-1250 / SPB7).